The following is a 383-amino-acid chain: UDP-N-acetylglucosamine--N-acetylmuramyl-(pentapeptide) pyrophosphoryl-undecaprenol N-acetylglucosamine transferase (383 aa).

UDP-N-acetyl-alpha-D-glucosamine is bound by residues threonine 10 to glycine 12, asparagine 124, arginine 165, serine 190, isoleucine 245, and glutamine 290. The disordered stretch occupies residues serine 363–serine 383.

It belongs to the glycosyltransferase 28 family. MurG subfamily.

It localises to the cell inner membrane. It carries out the reaction di-trans,octa-cis-undecaprenyl diphospho-N-acetyl-alpha-D-muramoyl-L-alanyl-D-glutamyl-meso-2,6-diaminopimeloyl-D-alanyl-D-alanine + UDP-N-acetyl-alpha-D-glucosamine = di-trans,octa-cis-undecaprenyl diphospho-[N-acetyl-alpha-D-glucosaminyl-(1-&gt;4)]-N-acetyl-alpha-D-muramoyl-L-alanyl-D-glutamyl-meso-2,6-diaminopimeloyl-D-alanyl-D-alanine + UDP + H(+). The protein operates within cell wall biogenesis; peptidoglycan biosynthesis. Cell wall formation. Catalyzes the transfer of a GlcNAc subunit on undecaprenyl-pyrophosphoryl-MurNAc-pentapeptide (lipid intermediate I) to form undecaprenyl-pyrophosphoryl-MurNAc-(pentapeptide)GlcNAc (lipid intermediate II). The sequence is that of UDP-N-acetylglucosamine--N-acetylmuramyl-(pentapeptide) pyrophosphoryl-undecaprenol N-acetylglucosamine transferase from Anaeromyxobacter dehalogenans (strain 2CP-1 / ATCC BAA-258).